Reading from the N-terminus, the 1868-residue chain is Inactive histone-lysine N-methyltransferase 2E (1868 aa).

Residues 63-66 carry the HCFC1-binding motif (HBM) motif; it reads DHNY. Residues 118 to 166 form a PHD-type zinc finger; it reads VTRCICGFTHDDGYMICCDKCSVWQHIDCMGIDRQHIPDTYLCERCQPR. Residues Cys-121, Cys-123, Cys-135, Cys-138, His-143, Cys-146, Cys-160, and Cys-163 each contribute to the Zn(2+) site. 3 disordered regions span residues 178–197, 217–268, and 308–329; these read RRKR…SGDE, ASRV…SSDS, and GSGN…SLFR. The region spanning 330-447 is the SET domain; sequence PPVESHIQKN…KGTEITIAFD (118 aa). The O-linked (GlcNAc) serine glycan is linked to Ser-435. An O-linked (GlcNAc) threonine glycan is attached at Thr-440. The tract at residues 472–504 is disordered; that stretch reads KRSSESTENINSGYETRRKKGKKEKDTSKEKDI. Over residues 494 to 504 the composition is skewed to basic and acidic residues; the sequence is KEKDTSKEKDI. The stretch at 559-613 forms a coiled coil; sequence VEMESEEQIAERKRKMTREERKMEAILQAFARLEKREKRREQALERISTAKTEVK. The span at 646–670 shows a compositional bias: basic residues; it reads NRTKQRKSFSRSRTHIGQQRRRHRT. A disordered region spans residues 646–682; the sequence is NRTKQRKSFSRSRTHIGQQRRRHRTVSMCSDIPPSSP. Residues Ser-837 and Ser-845 each carry the phosphoserine modification. Low complexity predominate over residues 884 to 908; sequence YSESSTPTPSPYATPTHTDITPTDP. 2 disordered regions span residues 884 to 924 and 1038 to 1068; these read YSES…ETYR and SMET…SSWV. The segment covering 1049–1068 has biased composition (polar residues); that stretch reads PSNQLDSTHSGRGTMYSSWV. At Ser-1070 the chain carries Phosphoserine. Disordered regions lie at residues 1165-1222, 1236-1315, 1334-1565, and 1585-1842; these read KRQR…PPPA, SSEE…SNHI, PDAE…QNQQ, and VFTS…QASP. The segment covering 1184–1197 has biased composition (low complexity); it reads SVSPHPSGSLSSSG. Polar residues predominate over residues 1203-1213; that stretch reads SSENGEQAENQ. At Ser-1282 the chain carries Phosphoserine. Residues 1282-1291 are compositionally biased toward basic and acidic residues; sequence SDHRKDKDSG. Low complexity-rich tracts occupy residues 1294–1312 and 1348–1363; these read SPCV…SSHS and PSPD…SKPG. At Ser-1364 the chain carries Phosphoserine. Composition is skewed to polar residues over residues 1389-1421, 1451-1463, and 1488-1498; these read ATVS…QNHA, HTEN…TPHT, and SQSPQVGTPQR. The segment covering 1506–1518 has biased composition (low complexity); the sequence is AAAQNLQANPQQA. A compositionally biased stretch (polar residues) spans 1519–1547; that stretch reads TSGALFTQTPSGQSSATYSQFNQQSLNST. Residues 1548–1558 show a composition bias toward pro residues; the sequence is APPPPPPPPPS. A compositionally biased stretch (polar residues) spans 1585–1603; sequence VFTSGPNQALPGSTSQQSV. The segment covering 1631-1642 has biased composition (pro residues); sequence VPPPPPPPPAPG. Residues 1647–1656 show a composition bias toward polar residues; the sequence is QQPSSHQQHS. Positions 1682-1692 are enriched in pro residues; the sequence is LPPPPPPPGPA. Over residues 1706-1716 the composition is skewed to polar residues; it reads QSLQAQHQHVV. A compositionally biased stretch (pro residues) spans 1719-1732; sequence APPPPPPPPPPPPA. Residues 1806-1816 show a composition bias toward polar residues; sequence QGPNSIPTPTA.

This sequence belongs to the class V-like SAM-binding methyltransferase superfamily. Histone-lysine methyltransferase family. TRX/MLL subfamily. In terms of assembly, component of a complex composed of KMT2E, OGT and USP7; the complex stabilizes KMT2E, preventing KMT2E ubiquitination and proteasomal-mediated degradation. Interacts (via N-terminus) with OGT (via TRP repeats). Interacts with deubiquitinating enzyme USP7 (via MATH domain). Interacts (via HBM motif) with HCFC1 (via Kelch domain). Interacts with E2F1; the interaction is probably indirect and is mediated via HCFC1. In terms of processing, ubiquitinated. Deubiquitinated by USP7. O-glycosylated at Ser-435 and Thr-440 in the SET domain by OGT which probably prevents KMT2E proteasomal-mediated degradation.

The protein resides in the chromosome. The protein localises to the cytoplasm. It is found in the cytoskeleton. It localises to the microtubule organizing center. Its subcellular location is the centrosome. The protein resides in the nucleus speckle. Functionally, associates with chromatin regions downstream of transcriptional start sites of active genes and thus regulates gene transcription. Chromatin interaction is mediated via the binding to tri-methylated histone H3 at 'Lys-4' (H3K4me3). Key regulator of hematopoiesis involved in terminal myeloid differentiation and in the regulation of hematopoietic stem cell (HSCs) self-renewal by a mechanism that involves DNA methylation. Also acts as an important cell cycle regulator, participating in cell cycle regulatory network machinery at multiple cell cycle stages including G1/S transition, S phase progression and mitotic entry. Recruited to E2F1 responsive promoters by HCFC1 where it stimulates tri-methylation of histone H3 at 'Lys-4' and transcriptional activation and thereby facilitates G1 to S phase transition. During myoblast differentiation, required to suppress inappropriate expression of S-phase-promoting genes and maintain expression of determination genes in quiescent cells. The sequence is that of Inactive histone-lysine N-methyltransferase 2E (Kmt2e) from Mus musculus (Mouse).